The following is a 439-amino-acid chain: 23S rRNA (uracil(1939)-C(5))-methyltransferase RlmD (439 aa).

Positions 10 to 68 (QKKLRAAFTTIVQDLDYQGLGVAKIQGKTWFIENALPQEQVQVQVIEEKRQYGLGRVQK) constitute a TRAM domain. [4Fe-4S] cluster contacts are provided by C81, C87, C90, and C168. S-adenosyl-L-methionine is bound by residues Q271, F300, N305, E321, D348, and D369. Residue C395 is the Nucleophile of the active site.

It belongs to the class I-like SAM-binding methyltransferase superfamily. RNA M5U methyltransferase family. RlmD subfamily.

The enzyme catalyses uridine(1939) in 23S rRNA + S-adenosyl-L-methionine = 5-methyluridine(1939) in 23S rRNA + S-adenosyl-L-homocysteine + H(+). In terms of biological role, catalyzes the formation of 5-methyl-uridine at position 1939 (m5U1939) in 23S rRNA. The polypeptide is 23S rRNA (uracil(1939)-C(5))-methyltransferase RlmD (Histophilus somni (strain 129Pt) (Haemophilus somnus)).